Reading from the N-terminus, the 754-residue chain is Pentatricopeptide repeat-containing protein At3g53700, chloroplastic (754 aa).

Residues 1–72 constitute a chloroplast transit peptide; it reads MAFSSCLKFY…DSAALRLFNL (72 aa). 17 PPR repeats span residues 82 to 116, 117 to 152, 153 to 187, 188 to 222, 223 to 257, 258 to 288, 294 to 328, 329 to 363, 364 to 398, 399 to 433, 434 to 468, 469 to 503, 504 to 538, 539 to 573, 574 to 608, 609 to 643, and 645 to 680; these read EPAL…RCEM, GTST…GLKP, DTHF…GIKP, DVST…GLVP, DEKT…GCSW, SNVS…MSNQ, DQYT…GYDP, DVYT…DCSP, NTVT…GILP, DVCT…GCEP, DEFT…GCAR, SVIT…GVSR, NSVT…GQKP, DKYT…GCEP, DIVT…GINL, TPHA…NEAP, and DAVS…GFVP.

Belongs to the PPR family. P subfamily.

The protein resides in the plastid. It is found in the chloroplast. Functionally, may be involved in female gametophyte development. This is Pentatricopeptide repeat-containing protein At3g53700, chloroplastic (MEE40) from Arabidopsis thaliana (Mouse-ear cress).